A 297-amino-acid chain; its full sequence is Transmembrane protein 169 (297 aa).

A disordered region spans residues 1 to 84 (MEEPALVEGQ…PKEEEGDDFI (84 aa)). Topologically, residues 1–159 (MEEPALVEGQ…CQLGADRGPH (159 aa)) are extracellular. The span at 9-18 (GQSQLPSPHH) shows a compositional bias: polar residues. Residues 60–84 (ETLDEEPGESEGGDQPKEEEGDDFI) show a composition bias toward acidic residues. A helical transmembrane segment spans residues 160-180 (VVLWTLVCLPVVFLLSFVVSF). Residues 181-210 (YYGTITWYNIFLVYNEERTFWHKISCCPCL) lie on the Cytoplasmic side of the membrane. The helical transmembrane segment at 211 to 231 (ILCYPVLIMAMASSLGLYAAV) threads the bilayer. Over 232 to 297 (VQLSWSWEAW…ATQEIETSAV (66 aa)) the chain is Extracellular.

Its subcellular location is the membrane. This is Transmembrane protein 169 (TMEM169) from Bos taurus (Bovine).